A 657-amino-acid chain; its full sequence is Zinc transporter ZIP4 (657 aa).

The N-terminal stretch at 1–22 (MMLPKSLTQGLLLAMLVGTAAM) is a signal peptide. The Extracellular segment spans residues 23 to 335 (VQPYHLLSLL…QDQLSQAERY (313 aa)). N-linked (GlcNAc...) asparagine glycosylation is found at N193, N220, and N268. A helical membrane pass occupies residues 336-356 (LYGSLATLLICLCAVFGLLLL). At 357-374 (TCAKCSTATHYIMQTFLS) the chain is on the cytoplasmic side. Residues 375-395 (LAVGALTGDALLHLIPKVLGL) traverse the membrane as a helical segment. Residues 396–417 (HTHSGEVHSHEEESIGGQSTWR) are Extracellular-facing. Residues 418 to 438 (LLAVLGGFYIFFLFESFFNLL) form a helical membrane-spanning segment. Over 439 to 508 (LPRDQDHEKD…LRAELRMLPY (70 aa)) the chain is Cytoplasmic. An Essential for SLC39A4 endocytosis motif is present at residues 462–464 (LQL). The segment at 467–491 (SNLRQSKQPHESSRSDLVTEETPEL) is disordered. A helical transmembrane segment spans residues 509–528 (LITLGDAVHNFADGLAVGAA). The Zn(2+) site is built by H517, N518, and D521. Residues 529–536 (FSSTWKTG) lie on the Extracellular side of the membrane. The helical transmembrane segment at 537–563 (LATSLAVFCHELPHELGDFAALLHAGL) threads the bilayer. H546, E547, and H550 together coordinate Zn(2+). Topologically, residues 564 to 568 (TVKRA) are cytoplasmic. Residues 569 to 589 (LLLNLASALTAFAGLYVALAV) traverse the membrane as a helical segment. Over 590–597 (GVGEEGET) the chain is Extracellular. A helical transmembrane segment spans residues 598-618 (WILAVATGLFLYVALCDMLPA). Residues 619–627 (MMNVRDQRP) lie on the Cytoplasmic side of the membrane. A helical transmembrane segment spans residues 628 to 648 (WLLFLLHNVGLLGGWTILLLL). The Extracellular segment spans residues 649 to 657 (SLYEDSITF).

The protein belongs to the ZIP transporter (TC 2.A.5) family. Homodimer; homodimerization is mediated by the transmembrane domain. Post-translationally, the extracellular N-terminal ectodomain is cleaved when cells are Zn(2+) deficient, N-terminally cleaved SLC39A4 is internalized at a faster rate. In terms of processing, under excess Zn(2+) conditions, SLC39A4 on the cell surface is rapidly endocytosed, ubiquitinated and degraded. Glycosylated. As to expression, expressed in duodenum, jejunum, and ileum.

It is found in the cell membrane. It localises to the recycling endosome membrane. The protein resides in the apical cell membrane. It carries out the reaction Zn(2+)(in) = Zn(2+)(out). Functionally, selective transporter that mediates the uptake of Zn(2+). Plays an essential role for dietary zinc uptake from small intestine. The Zn(2+) uniporter activity is regulated by zinc availability. Also exhibits polyspecific binding and transport of Cu(2+), Cd(2+) and possibly Ni(2+) but at higher concentrations. In Rattus norvegicus (Rat), this protein is Zinc transporter ZIP4 (Slc39a4).